The chain runs to 321 residues: MESNGVPMITLSSGIRMPALGMGTVETMEKGTEREKLAFLNAIEVGYRHFDTAAAYQSEECLGEAIAEALQLGLIKSRDELFITSKLWCADAHADLVLPALQNSLRNLKLEYLDLYLIHHPVSLKPGKLVNEIPKDHILPMDYKSVWAAMEECQTLGFTRAIGVSNFSCKKLQELMATAKIPPVVNQVEMSPTLHQKNLREYCKANNIMITAHSVLGAIGAPWGSNAVMDSKVLHQIAVARGKSVAQVSMRWVYQQGASLVVKSFNEARMKENLKIFDSELTAEDMEKISEIPQSRTSSADFLLSPTGPFKTEEEFWDEKD.

Thr-27 and Asp-51 together coordinate NADPH. Active-site proton donor residues include Tyr-56 and His-119. His-119 provides a ligand contact to substrate. Residues Ser-165, Gln-187, Ser-214, Leu-216, Ser-264, and Arg-269 each coordinate NADPH. The segment at 299–321 is disordered; that stretch reads SADFLLSPTGPFKTEEEFWDEKD.

The protein belongs to the aldo/keto reductase family. As to expression, latex secreting cells (laticifer cells). Expressed constitutively in all organs with highest levels in capsules. Restricted to the parietal region of sieve elements adjacent or proximal to laticifers in roots, stems, leaves and carpels.

Its subcellular location is the cytoplasm. The protein localises to the cytosol. It catalyses the reaction codeine + NADP(+) = codeinone + NADPH + H(+). It carries out the reaction neopine + NADP(+) = neopinone + NADPH + H(+). The catalysed reaction is morphine + NADP(+) = morphinone + NADPH + H(+). The enzyme catalyses neomorphine + NADP(+) = neomorphinone + NADPH + H(+). The protein operates within alkaloid biosynthesis; morphine biosynthesis. Functionally, NADPH-dependent codeinone reductase involved in biosynthesis of morphinan-type benzylisoquinoline and opiate alkaloids natural products. Reduces codeinone to codeine in the penultimate step in morphine biosynthesis. Can use morphinone, hydrocodone and hydromorphone as substrate during reductive reaction with NADPH as cofactor, and morphine and dihydrocodeine as substrate during oxidative reaction with NADP as cofactor. Converts morphinone to morphine, and neomorphinone to neomorphine. Reduces irreversibly neopinone, a spontaneous isomer of codeinone, to neopine; in planta, neopine levels are limited to low levels. This is NADPH-dependent codeinone reductase 1-2 from Papaver somniferum (Opium poppy).